The chain runs to 242 residues: ATP synthase subunit b 2 (242 aa).

A helical membrane pass occupies residues 4–24; that stretch reads LLAISSLTLLASLVLLVVSPA. The segment at 43–74 is disordered; it reads ADSEDGDHDHDHEGDDHGHDEAAGDEHGHGDG. Positions 49 to 74 are enriched in basic and acidic residues; sequence DHDHDHEGDDHGHDEAAGDEHGHGDG.

The protein belongs to the ATPase B chain family. In terms of assembly, F-type ATPases have 2 components, F(1) - the catalytic core - and F(0) - the membrane proton channel. F(1) has five subunits: alpha(3), beta(3), gamma(1), delta(1), epsilon(1). F(0) has three main subunits: a(1), b(2) and c(10-14). The alpha and beta chains form an alternating ring which encloses part of the gamma chain. F(1) is attached to F(0) by a central stalk formed by the gamma and epsilon chains, while a peripheral stalk is formed by the delta and b chains.

The protein localises to the cell inner membrane. Its function is as follows. F(1)F(0) ATP synthase produces ATP from ADP in the presence of a proton or sodium gradient. F-type ATPases consist of two structural domains, F(1) containing the extramembraneous catalytic core and F(0) containing the membrane proton channel, linked together by a central stalk and a peripheral stalk. During catalysis, ATP synthesis in the catalytic domain of F(1) is coupled via a rotary mechanism of the central stalk subunits to proton translocation. Component of the F(0) channel, it forms part of the peripheral stalk, linking F(1) to F(0). In Rhodopirellula baltica (strain DSM 10527 / NCIMB 13988 / SH1), this protein is ATP synthase subunit b 2.